The following is a 247-amino-acid chain: 3-deoxy-manno-octulosonate cytidylyltransferase (247 aa).

The protein belongs to the KdsB family.

The protein localises to the cytoplasm. The catalysed reaction is 3-deoxy-alpha-D-manno-oct-2-ulosonate + CTP = CMP-3-deoxy-beta-D-manno-octulosonate + diphosphate. The protein operates within nucleotide-sugar biosynthesis; CMP-3-deoxy-D-manno-octulosonate biosynthesis; CMP-3-deoxy-D-manno-octulosonate from 3-deoxy-D-manno-octulosonate and CTP: step 1/1. It functions in the pathway bacterial outer membrane biogenesis; lipopolysaccharide biosynthesis. Activates KDO (a required 8-carbon sugar) for incorporation into bacterial lipopolysaccharide in Gram-negative bacteria. This is 3-deoxy-manno-octulosonate cytidylyltransferase from Methylobacterium radiotolerans (strain ATCC 27329 / DSM 1819 / JCM 2831 / NBRC 15690 / NCIMB 10815 / 0-1).